Reading from the N-terminus, the 270-residue chain is MPSSFDLLGEMIGLLQTEQLTSSWACPLPNALTKRQDLWRALINQRPALPLSKDYLNLEDAYLDDWRASFVPVSVKDCQKTNYTSLFLYHGDIRYLAVDAIVNAANSELLGCFSPNHGCIDNAIHTFAGSRLRLACQAIMTEQGRKEAIGQAKLTSAYHLPASYIIHTVGPRITKGHHVSPIRADLLARCYRSSLDLAVKAGLTSLAFCSISTGEFGFPKKEAAQIAIKTVLKWQAEHPESKTLTTIFNTFTSEDKALYDTYLQKENNCE.

The region spanning 73–267 is the Macro domain; that stretch reads VSVKDCQKTN…LYDTYLQKEN (195 aa). 3 residues coordinate ADP-D-ribose: D92, I93, and N106. Zn(2+) is bound by residues C112, H117, and C119. C119, I120, D121, S212, T213, G214, E215, and F216 together coordinate ADP-D-ribose.

It belongs to the MacroD-type family. Zn-Macro subfamily. Zn(2+) serves as cofactor.

The enzyme catalyses 4-O-(ADP-D-ribosyl)-L-aspartyl-[protein] + H2O = L-aspartyl-[protein] + ADP-D-ribose + H(+). In terms of biological role, ADP-ribosylhydrolase that specifically reverses the SirTM-mediated mono-ADP-ribosylation at an asparatate residue of GcvH-L, by releasing ADP-ribose from the target protein. May play a role in the regulation of the response to host-induced oxidative stress. This is Protein-ADP-ribose hydrolase from Streptococcus pyogenes serotype M1.